The chain runs to 400 residues: CCA-adding enzyme (400 aa).

ATP is bound by residues glycine 28 and arginine 31. CTP is bound by residues glycine 28 and arginine 31. Positions 41 and 43 each coordinate Mg(2+). ATP-binding residues include arginine 112, aspartate 155, arginine 158, arginine 161, and arginine 164. The CTP site is built by arginine 112, aspartate 155, arginine 158, arginine 161, and arginine 164.

It belongs to the tRNA nucleotidyltransferase/poly(A) polymerase family. Bacterial CCA-adding enzyme type 3 subfamily. In terms of assembly, homodimer. Requires Mg(2+) as cofactor.

The enzyme catalyses a tRNA precursor + 2 CTP + ATP = a tRNA with a 3' CCA end + 3 diphosphate. It carries out the reaction a tRNA with a 3' CCA end + 2 CTP + ATP = a tRNA with a 3' CCACCA end + 3 diphosphate. Catalyzes the addition and repair of the essential 3'-terminal CCA sequence in tRNAs without using a nucleic acid template. Adds these three nucleotides in the order of C, C, and A to the tRNA nucleotide-73, using CTP and ATP as substrates and producing inorganic pyrophosphate. tRNA 3'-terminal CCA addition is required both for tRNA processing and repair. Also involved in tRNA surveillance by mediating tandem CCA addition to generate a CCACCA at the 3' terminus of unstable tRNAs. While stable tRNAs receive only 3'-terminal CCA, unstable tRNAs are marked with CCACCA and rapidly degraded. The protein is CCA-adding enzyme of Staphylococcus aureus (strain Mu3 / ATCC 700698).